A 171-amino-acid polypeptide reads, in one-letter code: UPF0398 protein MGAS9429_Spy1349 (171 aa).

The protein belongs to the UPF0398 family.

This is UPF0398 protein MGAS9429_Spy1349 from Streptococcus pyogenes serotype M12 (strain MGAS9429).